A 239-amino-acid polypeptide reads, in one-letter code: Serine protease SplD (239 aa).

The first 36 residues, 1 to 36 (MNKNIIIKSIAALTILTSITGVGTTVVDGIQQTAKA), serve as a signal peptide directing secretion. Active-site charge relay system residues include His-75, Asp-114, and Ser-192.

This sequence belongs to the peptidase S1B family.

It is found in the secreted. The protein is Serine protease SplD (splD) of Staphylococcus aureus (strain Mu3 / ATCC 700698).